The chain runs to 137 residues: Bombinin-like peptides 1 (137 aa).

The first 18 residues, 1–18, serve as a signal peptide directing secretion; sequence MNFKYIVAVSILIASAYA. N70 carries the post-translational modification Asparagine amide. A disordered region spans residues 91 to 112; sequence LDSFEHPEEASEKETRGFNQEE. The residue at position 118 (I118) is a D-allo-isoleucine. The residue at position 136 (I136) is an Isoleucine amide.

This sequence belongs to the bombinin family. In terms of tissue distribution, expressed by the skin glands.

The protein resides in the secreted. In terms of biological role, has antimicrobial activity, but no hemolytic activity. Preliminary evidence indicates that this peptide does not lyse and thus kill the bacteria by its antimicrobial activity. Its function is as follows. Bombinin H has antibacterial and hemolytic activity. In Bombina variegata (Yellow-bellied toad), this protein is Bombinin-like peptides 1.